The following is a 100-amino-acid chain: Cell division topological specificity factor (100 aa).

This sequence belongs to the MinE family.

Functionally, prevents the cell division inhibition by proteins MinC and MinD at internal division sites while permitting inhibition at polar sites. This ensures cell division at the proper site by restricting the formation of a division septum at the midpoint of the long axis of the cell. In Blochmanniella floridana, this protein is Cell division topological specificity factor.